A 239-amino-acid chain; its full sequence is L-cystine transport system permease protein TcyL (239 aa).

The 196-residue stretch at 21-216 folds into the ABC transmembrane type-1 domain; sequence LPVTLYILTL…AVAVLFEWFF (196 aa). Helical transmembrane passes span 25–45, 69–89, 96–116, and 196–216; these read LYIL…LALP, IMVQ…LIGI, PFYA…AEII, and EVYI…EWFF.

It belongs to the binding-protein-dependent transport system permease family. As to quaternary structure, the complex is composed of two ATP-binding proteins (TcyN), two transmembrane proteins (TcyL and TcyM) and two solute-binding proteins (TcyJ and TcyK).

It localises to the cell membrane. Functionally, part of the ABC transporter complex TcyJKLMN involved in L-cystine import. Probably responsible for the translocation of the substrate across the membrane. Is also involved in cystathionine, djenkolate, and S-methylcysteine transport. This Bacillus subtilis (strain 168) protein is L-cystine transport system permease protein TcyL (tcyL).